The primary structure comprises 73 residues: Salivary protein FS48 (73 aa).

An N-terminal signal peptide occupies residues 1 to 21 (MKFAFAIFVVLAILHTELISA).

The protein localises to the secreted. Salivary protein that inhibits host voltage-gated potassium channels Kv1.1/KCNA1, Kv1.2/KCNA2 and Kv1.3/KCNA3 likely via a voltage-independent pore-blocking mechanism. Suppresses expression of the Kv1.3/KCNA3 channel in lipopolysaccharide (LPS)-stimulated mouse macrophages and human T-cells. Down-regulates secretion of nitric oxide (NO) and inflammatory cytokines, such as TNF-alpha/TNF, IL-1beta/IL1B and IL6, in LPS-stimulated mouse macrophages in a manner dependent on Kv1.3/KCNA3 channel blockage. Reduces activation of MAPK and NF-kappa-B signaling pathways in LPS-stimulated mouse macrophages. Modulates intracellular Ca(2+) signaling in human PMA/ionomycin-triggered T-cells. Interferes with the activation of the MAPK, NF-kappa-B and NFATc1 pathways in human PMA/ionomycin-triggered T-cells. Reduces proliferation of human PMA/ionomycin-triggered T-cells. Down-regulates secretion of cytokines, such as TNF-alpha/TNF and IL2, in human PMA/ionomycin-triggered T-cells. The polypeptide is Salivary protein FS48 (Xenopsylla cheopis (Oriental rat flea)).